Consider the following 412-residue polypeptide: FAD-dependent monooxygenase nscC (412 aa).

The first 21 residues, Met-1–Ser-21, serve as a signal peptide directing secretion. Glu-35 and Ala-46 together coordinate FAD. 2 N-linked (GlcNAc...) asparagine glycosylation sites follow: Asn-68 and Asn-92. Arg-119 lines the FAD pocket. 3 N-linked (GlcNAc...) asparagine glycosylation sites follow: Asn-170, Asn-231, and Asn-251. 2 residues coordinate FAD: Asp-326 and Gly-339.

The protein belongs to the paxM FAD-dependent monooxygenase family. FAD is required as a cofactor.

Its pathway is secondary metabolite biosynthesis. Functionally, FAD-dependent monooxygenase; part of the gene cluster that mediates the biosynthesis of neosartoricin B, a prenylated anthracenone that probably exhibits T-cell antiproliferative activity, suggestive of a physiological role as an immunosuppressive agent. The non-reducing polyketide synthase nscA probably synthesizes and cyclizes the decaketide backbone. The hydrolase nscB then mediates the product release through hydrolysis followed by spontaneous decarboxylation. The prenyltransferase nscD catalyzes the addition of the dimethylallyl group to the aromatic C5. The FAD-dependent monooxygenase nscC is then responsible for the stereospecific hydroxylation at C2. Neosartoricin B can be converted into two additional compounds neosartoricins C and D. Neosartoricin C is a spirocyclic compound that is cyclized through the attack of C3 hydroxyl on C14, followed by dehydration. On the other hand, neosartoricin D is a further cyclized compound in which attack of C2 on C14 in neosartoricin C results in the formation of the acetal-containing dioxabicyclo-octanone ring. Both of these compounds are novel and possibly represent related metabolites of the gene cluster. The protein is FAD-dependent monooxygenase nscC of Trichophyton rubrum (strain ATCC MYA-4607 / CBS 118892) (Athlete's foot fungus).